Reading from the N-terminus, the 684-residue chain is GLLLFPTATKKLRRMWAFPSILLLSIVMIFSTXLSIQQINSSSIYQYVWSWTXDNDFSLEFGYLIDPLTSIMSMLXTTVGIMVLIYSDNYMAHDQGYLIFFAYMSFFSTSMLGLVTSSNLIQIYIFWELVGMCSYLLIGFWFTRPSAANACQKAFVTNRVGDFGLLLGILGFYWITGSFEFQDLFEIFNNLIYNNQVNSPFVTLCAALLFAGAVAKSAQFPLHVWLPDAMEGPTPISALIHAATMVAAGIFLVARLLPLFIVIPYIMNFISLIGIITVLLGATLALAQKDIKRGLAYSTMSQLXYMMLALGMGSYRSALFHLITHAYSKALLFLGSGSVIHSMETIVGYSPDKSQNMVLMGGLRKHVPITKTSFLLGTLSLCGIPPLACFWSKDEILNESWLYSPIFAIIAWATAGLTAFYMFRIYLLTFEGHLNVHFQNYSGNQNASLYSISLWGKGCSKRINKNFLLLKMNNNESSSFFSKNTYRSDENVRKRNRGRPFINIVDFYNQKSFSYPYESDNTMLFPLLVLVLFTLFVGILGIPFNQEGRDLDILSKWLAPSINLLHQKSEDSTDWYEFLKNAIFSVSIASFGIFLASXLYKPIYSSFKNFDLINLFVKTGPKRSRWDKIINILYXWSYXRAYIDTFYTTSXTGAIRGLAQLTDFFDRRVIDGITNGVGVMSFFV.

Helical transmembrane passes span 16–36 (WAFP…XLSI), 65–85 (IDPL…MVLI), 96–116 (GYLI…GLVT), 123–143 (IYIF…FWFT), 161–181 (GDFG…SFEF), 206–226 (AALL…HVWL), 234–254 (TPIS…FLVA), 256–276 (LLPL…IGII), 303–323 (LXYM…FHLI), 330–350 (ALLF…VGYS), 372–392 (TSFL…CFWS), 401–421 (WLYS…TAFY), 524–544 (LFPL…GIPF), and 583–603 (IFSV…YKPI).

Belongs to the complex I subunit 5 family. In terms of assembly, NDH is composed of at least 16 different subunits, 5 of which are encoded in the nucleus.

It localises to the plastid. It is found in the chloroplast thylakoid membrane. The enzyme catalyses a plastoquinone + NADH + (n+1) H(+)(in) = a plastoquinol + NAD(+) + n H(+)(out). The catalysed reaction is a plastoquinone + NADPH + (n+1) H(+)(in) = a plastoquinol + NADP(+) + n H(+)(out). Its function is as follows. NDH shuttles electrons from NAD(P)H:plastoquinone, via FMN and iron-sulfur (Fe-S) centers, to quinones in the photosynthetic chain and possibly in a chloroplast respiratory chain. The immediate electron acceptor for the enzyme in this species is believed to be plastoquinone. Couples the redox reaction to proton translocation, and thus conserves the redox energy in a proton gradient. The polypeptide is NAD(P)H-quinone oxidoreductase subunit 5, chloroplastic (ndhF) (Sesamum indicum (Oriental sesame)).